A 315-amino-acid polypeptide reads, in one-letter code: MTPVRSAPSGRTGTYHVPVLLSEIETMLANATTVLDCTLGGGGHTAAFLERGVRVTGVDRDPRALAAARERLGEYERSGQFRAVLANYAALEEAGFSTDDRFDGILLDLGVSSHQFDDASRGFTFREGAPLDMRMGTDADLDAGELLNTIDEVDLSALLRAYADEPRAARMAREIVRRRERRPFATADDLVDAIRAVLGPRSGAPDFARIFQAVRIAVNDELSGLERALPALRDRLTPGGVLAIISYHSGEDRLVKNAFRDWSASCVCPPRQFVCTCRGRPLGDTITRKPVSATEQEIDQNTRARSARLRAWRSA.

S-adenosyl-L-methionine-binding positions include 42–44 (GGH), aspartate 59, phenylalanine 96, aspartate 108, and glutamine 115.

The protein belongs to the methyltransferase superfamily. RsmH family.

It localises to the cytoplasm. It carries out the reaction cytidine(1402) in 16S rRNA + S-adenosyl-L-methionine = N(4)-methylcytidine(1402) in 16S rRNA + S-adenosyl-L-homocysteine + H(+). In terms of biological role, specifically methylates the N4 position of cytidine in position 1402 (C1402) of 16S rRNA. The protein is Ribosomal RNA small subunit methyltransferase H of Gemmatimonas aurantiaca (strain DSM 14586 / JCM 11422 / NBRC 100505 / T-27).